The chain runs to 546 residues: Chaperonin GroEL (546 aa).

Residues 29 to 32 (TMGP), lysine 50, 86 to 90 (DGTTT), glycine 414, and aspartate 492 each bind ATP.

Belongs to the chaperonin (HSP60) family. Forms a cylinder of 14 subunits composed of two heptameric rings stacked back-to-back. Interacts with the co-chaperonin GroES.

Its subcellular location is the cytoplasm. It catalyses the reaction ATP + H2O + a folded polypeptide = ADP + phosphate + an unfolded polypeptide.. In terms of biological role, together with its co-chaperonin GroES, plays an essential role in assisting protein folding. The GroEL-GroES system forms a nano-cage that allows encapsulation of the non-native substrate proteins and provides a physical environment optimized to promote and accelerate protein folding. In Helicobacter pylori (strain J99 / ATCC 700824) (Campylobacter pylori J99), this protein is Chaperonin GroEL.